A 231-amino-acid chain; its full sequence is Aldehyde decarbonylase (231 aa).

The Fe cation site is built by glutamate 32, glutamate 60, histidine 63, glutamate 115, and histidine 147.

It belongs to the aldehyde decarbonylase family. Requires Binds 2 metal cations per subunit. The catalytic dinuclear metal-binding site could be either a di-iron or a manganese-iron cofactor. as cofactor.

It catalyses the reaction a long-chain fatty aldehyde + 2 NADPH + O2 + H(+) = a long-chain alkane + formate + 2 NADP(+) + H2O. Functionally, catalyzes the decarbonylation of fatty aldehydes to alkanes. Requires the presence of ferredoxin, ferredoxin reductase and NADPH for in vitro decarbonylase activity. Involved in the biosynthesis of alkanes, mainly heptadecane and pentadecane. In Synechococcus elongatus (strain ATCC 33912 / PCC 7942 / FACHB-805) (Anacystis nidulans R2), this protein is Aldehyde decarbonylase.